The following is a 369-amino-acid chain: Glycerol-3-phosphate dehydrogenase [NAD(P)+] (369 aa).

NADPH contacts are provided by Ser-6, Trp-7, Arg-27, Arg-28, and Lys-101. Sn-glycerol 3-phosphate is bound by residues Lys-101 and Gly-131. Residue Ala-135 coordinates NADPH. The sn-glycerol 3-phosphate site is built by Lys-186, Asp-239, Ser-249, Arg-250, and Asn-251. Lys-186 functions as the Proton acceptor in the catalytic mechanism. Arg-250 is an NADPH binding site. Glu-276 is an NADPH binding site. Residues 312-369 (KDIAPHLTTDDEPQGERTRGERTTDDGQGQGRTSVWGSLKRAFDQLRDGGGSSRRDRP) are disordered. Composition is skewed to basic and acidic residues over residues 325 to 336 (QGERTRGERTTD) and 352 to 369 (RAFDQLRDGGGSSRRDRP).

This sequence belongs to the NAD-dependent glycerol-3-phosphate dehydrogenase family.

Its subcellular location is the cytoplasm. It carries out the reaction sn-glycerol 3-phosphate + NAD(+) = dihydroxyacetone phosphate + NADH + H(+). The enzyme catalyses sn-glycerol 3-phosphate + NADP(+) = dihydroxyacetone phosphate + NADPH + H(+). Its pathway is membrane lipid metabolism; glycerophospholipid metabolism. Functionally, catalyzes the reduction of the glycolytic intermediate dihydroxyacetone phosphate (DHAP) to sn-glycerol 3-phosphate (G3P), the key precursor for phospholipid synthesis. The polypeptide is Glycerol-3-phosphate dehydrogenase [NAD(P)+] (Leifsonia xyli subsp. xyli (strain CTCB07)).